Here is a 251-residue protein sequence, read N- to C-terminus: RING-H2 finger protein ATL10 (251 aa).

A helical membrane pass occupies residues 59–79 (MMLLSILICGIICCLGLHYII). The segment at 135-177 (CVICLSDFVSGEQLRLLPKCNHGFHVRCIDKWLQQHLTCPKCR) adopts an RING-type; atypical zinc-finger fold.

This sequence belongs to the RING-type zinc finger family. ATL subfamily.

The protein localises to the membrane. The catalysed reaction is S-ubiquitinyl-[E2 ubiquitin-conjugating enzyme]-L-cysteine + [acceptor protein]-L-lysine = [E2 ubiquitin-conjugating enzyme]-L-cysteine + N(6)-ubiquitinyl-[acceptor protein]-L-lysine.. It functions in the pathway protein modification; protein ubiquitination. The protein is RING-H2 finger protein ATL10 (ATL10) of Arabidopsis thaliana (Mouse-ear cress).